Consider the following 264-residue polypeptide: Carbonic anhydrase 7 (264 aa).

The region spanning 5 to 262 (HCWGYGQDDG…LKGRVVKASF (258 aa)) is the Alpha-carbonic anhydrase domain. His-66 serves as the catalytic Proton donor/acceptor. Residues His-96, His-98, and His-121 each coordinate Zn(2+). 201 to 202 (TT) serves as a coordination point for substrate.

Belongs to the alpha-carbonic anhydrase family. Zn(2+) serves as cofactor.

It localises to the cytoplasm. It catalyses the reaction hydrogencarbonate + H(+) = CO2 + H2O. In terms of biological role, reversible hydration of carbon dioxide. The sequence is that of Carbonic anhydrase 7 (Ca7) from Mus musculus (Mouse).